The primary structure comprises 234 residues: Uridylate kinase (234 aa).

9–12 (KLSG) serves as a coordination point for ATP. Residue G51 coordinates UMP. ATP-binding residues include G52 and R56. Residues D71 and 132 to 139 (CGNPFFTT) each bind UMP. Residues T159, Y165, and D168 each contribute to the ATP site.

The protein belongs to the UMP kinase family. In terms of assembly, homohexamer.

It localises to the cytoplasm. It carries out the reaction UMP + ATP = UDP + ADP. Its pathway is pyrimidine metabolism; CTP biosynthesis via de novo pathway; UDP from UMP (UMPK route): step 1/1. Its activity is regulated as follows. Inhibited by UTP. Catalyzes the reversible phosphorylation of UMP to UDP. The polypeptide is Uridylate kinase (Prochlorococcus marinus (strain MIT 9515)).